We begin with the raw amino-acid sequence, 1387 residues long: DNA-directed RNA polymerase subunit beta'' (1387 aa).

Residues Cys-224, Cys-295, Cys-302, and Cys-305 each contribute to the Zn(2+) site. Residues 883 to 903 (SHTGKRNDPAGSGLIPDNGSD) are disordered.

It belongs to the RNA polymerase beta' chain family. RpoC2 subfamily. As to quaternary structure, in plastids the minimal PEP RNA polymerase catalytic core is composed of four subunits: alpha, beta, beta', and beta''. When a (nuclear-encoded) sigma factor is associated with the core the holoenzyme is formed, which can initiate transcription. Zn(2+) serves as cofactor.

The protein localises to the plastid. The protein resides in the chloroplast. It catalyses the reaction RNA(n) + a ribonucleoside 5'-triphosphate = RNA(n+1) + diphosphate. DNA-dependent RNA polymerase catalyzes the transcription of DNA into RNA using the four ribonucleoside triphosphates as substrates. The sequence is that of DNA-directed RNA polymerase subunit beta'' from Platanus occidentalis (Sycamore).